The sequence spans 70 residues: Beta sliding clamp (70 aa).

The protein belongs to the beta sliding clamp family. Forms a ring-shaped head-to-tail homodimer around DNA which binds and tethers DNA polymerases and other proteins to the DNA. The DNA replisome complex has a single clamp-loading complex (3 tau and 1 each of delta, delta', psi and chi subunits) which binds 3 Pol III cores (1 core on the leading strand and 2 on the lagging strand) each with a beta sliding clamp dimer. Additional proteins in the replisome are other copies of gamma, psi and chi, Ssb, DNA helicase and RNA primase.

It is found in the cytoplasm. Functionally, confers DNA tethering and processivity to DNA polymerases and other proteins. Acts as a clamp, forming a ring around DNA (a reaction catalyzed by the clamp-loading complex) which diffuses in an ATP-independent manner freely and bidirectionally along dsDNA. Initially characterized for its ability to contact the catalytic subunit of DNA polymerase III (Pol III), a complex, multichain enzyme responsible for most of the replicative synthesis in bacteria; Pol III exhibits 3'-5' exonuclease proofreading activity. The beta chain is required for initiation of replication as well as for processivity of DNA replication. This chain is Beta sliding clamp (dnaN), found in Rhodobacter capsulatus (Rhodopseudomonas capsulata).